The sequence spans 192 residues: Imidazoleglycerol-phosphate dehydratase (192 aa).

It belongs to the imidazoleglycerol-phosphate dehydratase family.

It is found in the cytoplasm. It catalyses the reaction D-erythro-1-(imidazol-4-yl)glycerol 3-phosphate = 3-(imidazol-4-yl)-2-oxopropyl phosphate + H2O. Its pathway is amino-acid biosynthesis; L-histidine biosynthesis; L-histidine from 5-phospho-alpha-D-ribose 1-diphosphate: step 6/9. The sequence is that of Imidazoleglycerol-phosphate dehydratase from Caldivirga maquilingensis (strain ATCC 700844 / DSM 13496 / JCM 10307 / IC-167).